The chain runs to 193 residues: Superoxide dismutase [Fe] (193 aa).

Positions 27, 74, 157, and 161 each coordinate Fe cation.

This sequence belongs to the iron/manganese superoxide dismutase family. Monomer. The cofactor is Fe cation.

The enzyme catalyses 2 superoxide + 2 H(+) = H2O2 + O2. In terms of biological role, destroys superoxide anion radicals which are normally produced within the cells and which are toxic to biological systems. Involved in the metabolism of 4-aminophenol. May have an indirect role in hydroxyquinol metabolism by scavenging and detoxifying reactive species that promote its auto-oxidation. In Burkholderia sp, this protein is Superoxide dismutase [Fe].